We begin with the raw amino-acid sequence, 414 residues long: Arginine deiminase (414 aa).

The active-site Amidino-cysteine intermediate is the Cys-402.

This sequence belongs to the arginine deiminase family.

Its subcellular location is the cytoplasm. The enzyme catalyses L-arginine + H2O = L-citrulline + NH4(+). It functions in the pathway amino-acid degradation; L-arginine degradation via ADI pathway; carbamoyl phosphate from L-arginine: step 1/2. The protein is Arginine deiminase of Oenococcus oeni (strain ATCC BAA-331 / PSU-1).